The sequence spans 386 residues: Succinate--CoA ligase [ADP-forming] subunit beta (386 aa).

In terms of domain architecture, ATP-grasp spans 9-244 (KHILSRFGVS…YDEEIKEEIE (236 aa)). Residues lysine 46, 53 to 55 (GRG), glutamate 99, cysteine 102, and glutamate 107 contribute to the ATP site. 2 residues coordinate Mg(2+): asparagine 199 and aspartate 213. Residues asparagine 264 and 320 to 322 (GIM) contribute to the substrate site.

The protein belongs to the succinate/malate CoA ligase beta subunit family. As to quaternary structure, heterotetramer of two alpha and two beta subunits. Mg(2+) serves as cofactor.

The catalysed reaction is succinate + ATP + CoA = succinyl-CoA + ADP + phosphate. It catalyses the reaction GTP + succinate + CoA = succinyl-CoA + GDP + phosphate. Its pathway is carbohydrate metabolism; tricarboxylic acid cycle; succinate from succinyl-CoA (ligase route): step 1/1. Functionally, succinyl-CoA synthetase functions in the citric acid cycle (TCA), coupling the hydrolysis of succinyl-CoA to the synthesis of either ATP or GTP and thus represents the only step of substrate-level phosphorylation in the TCA. The beta subunit provides nucleotide specificity of the enzyme and binds the substrate succinate, while the binding sites for coenzyme A and phosphate are found in the alpha subunit. The sequence is that of Succinate--CoA ligase [ADP-forming] subunit beta from Ehrlichia canis (strain Jake).